Reading from the N-terminus, the 347-residue chain is GMP reductase (347 aa).

Residue 108–131 (ADFEKTKQILDLNPALNFVCIDVA) coordinates NADP(+). K(+) contacts are provided by G181 and G183. C186 functions as the Thioimidate intermediate in the catalytic mechanism. 216 to 239 (IVSDGGCTTPGDVAKAFGGGADFV) lines the NADP(+) pocket.

Belongs to the IMPDH/GMPR family. GuaC type 1 subfamily. In terms of assembly, homotetramer.

The catalysed reaction is IMP + NH4(+) + NADP(+) = GMP + NADPH + 2 H(+). In terms of biological role, catalyzes the irreversible NADPH-dependent deamination of GMP to IMP. It functions in the conversion of nucleobase, nucleoside and nucleotide derivatives of G to A nucleotides, and in maintaining the intracellular balance of A and G nucleotides. This is GMP reductase from Shigella boydii serotype 4 (strain Sb227).